The following is a 427-amino-acid chain: Glutamate-1-semialdehyde 2,1-aminomutase (427 aa).

An N6-(pyridoxal phosphate)lysine modification is found at Lys-265.

The protein belongs to the class-III pyridoxal-phosphate-dependent aminotransferase family. HemL subfamily. In terms of assembly, homodimer. Pyridoxal 5'-phosphate serves as cofactor.

Its subcellular location is the cytoplasm. It carries out the reaction (S)-4-amino-5-oxopentanoate = 5-aminolevulinate. It participates in porphyrin-containing compound metabolism; protoporphyrin-IX biosynthesis; 5-aminolevulinate from L-glutamyl-tRNA(Glu): step 2/2. The protein is Glutamate-1-semialdehyde 2,1-aminomutase of Burkholderia thailandensis (strain ATCC 700388 / DSM 13276 / CCUG 48851 / CIP 106301 / E264).